The following is a 420-amino-acid chain: UDP-N-acetylglucosamine 1-carboxyvinyltransferase (420 aa).

Position 22–23 (22–23 (KN)) interacts with phosphoenolpyruvate. A UDP-N-acetyl-alpha-D-glucosamine-binding site is contributed by Arg-93. Cys-117 (proton donor) is an active-site residue. A 2-(S-cysteinyl)pyruvic acid O-phosphothioketal modification is found at Cys-117. Residues 162–165 (KVSV), Asp-307, and Ile-329 contribute to the UDP-N-acetyl-alpha-D-glucosamine site.

The protein belongs to the EPSP synthase family. MurA subfamily.

It is found in the cytoplasm. It catalyses the reaction phosphoenolpyruvate + UDP-N-acetyl-alpha-D-glucosamine = UDP-N-acetyl-3-O-(1-carboxyvinyl)-alpha-D-glucosamine + phosphate. The protein operates within cell wall biogenesis; peptidoglycan biosynthesis. In terms of biological role, cell wall formation. Adds enolpyruvyl to UDP-N-acetylglucosamine. This chain is UDP-N-acetylglucosamine 1-carboxyvinyltransferase, found in Actinobacillus succinogenes (strain ATCC 55618 / DSM 22257 / CCUG 43843 / 130Z).